The sequence spans 476 residues: Replication factor C large subunit (476 aa).

50–57 (GPPGVGKT) serves as a coordination point for ATP. A disordered region spans residues 447-476 (YEKGTKKGKGEKRRKGSDEGSGLLKWLKKD). A compositionally biased stretch (basic residues) spans 452–461 (KKGKGEKRRK).

It belongs to the activator 1 small subunits family. RfcL subfamily. In terms of assembly, heteromultimer composed of small subunits (RfcS) and large subunits (RfcL).

In terms of biological role, part of the RFC clamp loader complex which loads the PCNA sliding clamp onto DNA. The polypeptide is Replication factor C large subunit (Ignicoccus hospitalis (strain KIN4/I / DSM 18386 / JCM 14125)).